Here is a 587-residue protein sequence, read N- to C-terminus: Xyloglucan-specific endo-beta-1,4-glucanase BoGH9A (587 aa).

Residues 1 to 19 (MKIVRYIALFGILSGLAVA) form the signal peptide. Residue Cys20 is the site of N-palmitoyl cysteine attachment. Cys20 carries S-diacylglycerol cysteine lipidation. Asp185 (nucleophile) is an active-site residue. Residues His511 and Asp553 contribute to the active site. Glu562 acts as the Proton donor in catalysis.

This sequence belongs to the glycosyl hydrolase 9 (cellulase E) family.

It is found in the cell outer membrane. It carries out the reaction xyloglucan + H2O = xyloglucan oligosaccharides.. It participates in glucan metabolism; xyloglucan degradation. Catalyzes endohydrolysis of 1,4-beta-D-glucosidic linkages in xyloglucan with retention of the beta-configuration of the glycosyl residues in xyloglucan degradation. Cleaves the backbone of the 3 major types of natural xyloglucans (seed galactoxyloglucan from tamarind kernel, dicot fucogalactoxyloglucan from lettuce leaves, and solanaceous arabinogalactoxyloglucan from tomato fruit), to produce xyloglucan oligosaccharides. May be superfluous in xyloglucan degradation compared to BoGH5A (AC A7LXT7), the other Xyloglucan-specific endo-beta-1,4-glucanase. This chain is Xyloglucan-specific endo-beta-1,4-glucanase BoGH9A, found in Bacteroides ovatus (strain ATCC 8483 / DSM 1896 / JCM 5824 / BCRC 10623 / CCUG 4943 / NCTC 11153).